The sequence spans 217 residues: MTTGADADLIERGRKLFAGDWQFIWASPSIETLPPMAGVEVAFAGRSNVGKSSLINALTGRGTLARTSRTPGRTQELIFFEGPKDADVRLVDMPGYGFASAPKARIASWTSLIHKFLLGRASLARVYVLIDSRHGIKDIDQAILTTLDRSAVSYQIVLTKADEVKATEMAERTEATRTLLAKHPAAFPDVLVTSSRTGYGVPELRAAMARLIGEHQR.

The 178-residue stretch at 37 to 214 (AGVEVAFAGR…RAAMARLIGE (178 aa)) folds into the EngB-type G domain. GTP contacts are provided by residues 45 to 52 (GRSNVGKS), 72 to 76 (GRTQE), 92 to 95 (DMPG), 159 to 162 (TKAD), and 193 to 195 (TSS). Positions 52 and 74 each coordinate Mg(2+).

The protein belongs to the TRAFAC class TrmE-Era-EngA-EngB-Septin-like GTPase superfamily. EngB GTPase family. Requires Mg(2+) as cofactor.

Its function is as follows. Necessary for normal cell division and for the maintenance of normal septation. This is Probable GTP-binding protein EngB from Nitrobacter hamburgensis (strain DSM 10229 / NCIMB 13809 / X14).